Consider the following 314-residue polypeptide: DNA-directed RNA polymerase subunit alpha (314 aa).

Residues 1 to 228 (MIEIEKPRIE…EHLNIFVGLT (228 aa)) form an alpha N-terminal domain (alpha-NTD) region. The alpha C-terminal domain (alpha-CTD) stretch occupies residues 245–314 (KEKVLEMSIE…DLGLGLRKED (70 aa)).

The protein belongs to the RNA polymerase alpha chain family. Homodimer. The RNAP catalytic core consists of 2 alpha, 1 beta, 1 beta' and 1 omega subunit. When a sigma factor is associated with the core the holoenzyme is formed, which can initiate transcription.

The enzyme catalyses RNA(n) + a ribonucleoside 5'-triphosphate = RNA(n+1) + diphosphate. Its function is as follows. DNA-dependent RNA polymerase catalyzes the transcription of DNA into RNA using the four ribonucleoside triphosphates as substrates. The sequence is that of DNA-directed RNA polymerase subunit alpha from Staphylococcus saprophyticus subsp. saprophyticus (strain ATCC 15305 / DSM 20229 / NCIMB 8711 / NCTC 7292 / S-41).